Reading from the N-terminus, the 278-residue chain is 3-methyl-2-oxobutanoate hydroxymethyltransferase (278 aa).

2 residues coordinate Mg(2+): Asp-43 and Asp-82. 3-methyl-2-oxobutanoate-binding positions include 43 to 44, Asp-82, and Lys-112; that span reads DS. Glu-114 provides a ligand contact to Mg(2+). Glu-181 acts as the Proton acceptor in catalysis.

The protein belongs to the PanB family. Homodecamer; pentamer of dimers. Requires Mg(2+) as cofactor.

The protein resides in the cytoplasm. The enzyme catalyses 3-methyl-2-oxobutanoate + (6R)-5,10-methylene-5,6,7,8-tetrahydrofolate + H2O = 2-dehydropantoate + (6S)-5,6,7,8-tetrahydrofolate. It functions in the pathway cofactor biosynthesis; (R)-pantothenate biosynthesis; (R)-pantoate from 3-methyl-2-oxobutanoate: step 1/2. Catalyzes the reversible reaction in which hydroxymethyl group from 5,10-methylenetetrahydrofolate is transferred onto alpha-ketoisovalerate to form ketopantoate. The protein is 3-methyl-2-oxobutanoate hydroxymethyltransferase of Bacillus cereus (strain ATCC 14579 / DSM 31 / CCUG 7414 / JCM 2152 / NBRC 15305 / NCIMB 9373 / NCTC 2599 / NRRL B-3711).